Here is a 245-residue protein sequence, read N- to C-terminus: DNA repair protein RecO (245 aa).

It belongs to the RecO family.

In terms of biological role, involved in DNA repair and RecF pathway recombination. This is DNA repair protein RecO from Pectobacterium atrosepticum (strain SCRI 1043 / ATCC BAA-672) (Erwinia carotovora subsp. atroseptica).